The chain runs to 1715 residues: MTSTASAQQPVLRTKTPSYHAPPSTDPLSGATIHTLRCLDTPIHLGYHLIPHIAKTLLSTLPSSTYVLITDQNLEARCSVTTAFRREFEKAAVHLSSSHSWRLLTKVIPPGEASKSRDGKNAIEDWMFEHRVTRDAVVLAVGGGVIGDLVGFVAATFMRGLKFVQIPTTLLAMVDSAVGGKTAIDHPLGKNLIGSFHQPNYVFIDAAWLKTLPVREFSNGMAEVVKTAAIWDPIDFAKLESSAPAIRSAVLGPFAKDAPLDQGRTLETRTESQSLLLDVIRGSVGVKAHIVTIDEKETGLRNLVNFGHTIGHAIEAVLTPEMLHGECISIGMILEAEVARYMHGLSQVAIGRLTRCLKEYDLPVSLSDSRVTRLAKSLDVTVDRLLDIMKVDKKNSGTNKKIVLLSSIGDTVQNMASTVSDHIIRRVLSLAATVTPIHEQPNKPKVTLSTPGSKSISNRALVLAALATNTCRLRNMLHSDDTQVMMAGLHDLQAARFEFEDGGETIVVHGNAGALARPANDKQIYLQNAGTAARFMATVVSLVHNDGNQHPVVITGNKRMKERPIAALVDALRSNGTSIDYLEGHGCLPLAVKGTTHGFKGGKIQLSATISSQYVSSILLCAPYAAEQVVLELVGGQVISQLYIDMTIAMMATFGIKVERLLDPTTGRPSNTYRIPKGHYVSPDVYDIESDASSATYPLAIAAITGTECTVPNIGSASLQGDARFAKEVLEPMGCTVVQTATSTTVIGPKLGQLRQIGLVDMEPMTDAFLTASVLLAVAAHSPANGSTSNARPSTRITGIANQRVKECNRIRAMMDELAKFGVNTKEHDDGLEIFGIDYRQLHANVRVHCYDDHRVAMAFSVLASLAPGAILEEKRCVEKTWPNWWDDLERKLGIRVHGVDPECSPSLCISPSHFTKASAASTNGKPPTCLSQLTCGKALTPRKYSKHATIICIGMRASGKTFLGAIGAAALSRTFIDADVVFNEKLGAKDGLGDFVREHGWPAFRQKELEILQELIARHPSGALISLGGGVVETEACRQILAEYAQTKGPVIYIVRDTNAIVKFLATSDRPAYGEPVMDVYRRRNPWFSECSSAELVSYSEGESLAIQPCAMNVPDPSFTIQKKFGLETEVARFFKFVVGQDTNQIRDLVVDSRKGGRRTYFLSLTFPDVVPKLELIRSMESGSDALEFRADLLNPSGQPVTTPQIPPTEYVKNQLAALRHRTSLPIVFTVRTHSQGGMFPDGKQHEYFELISLALRHACEYIDLELGWDDDLLSAVVQAKGNSQIIASWHDWSGRLDWESESTAKIYEKACRFGDIAKIIGKATTMEDNYSLERFRAKVSATATKPLLAVNMGSVGQLSRIVNPVFTPITHEAMPFKAAPGQLSFRQVQTALSLIGQADARRFALFGSPIGHSLSPLLHNTGFAALGLPHQYELLESTEINDAVAAFVRSPDFGGASVTIPHKLNIIKLLDEVTDEAKTIGAVNTIIPIRDAQGVVTSLVGDNTDWIAIETLARRSLRTVHLADPNLTGLVIGAGGSARAALFALYRLGVKRILLFNRTLANAEKLAREVPPEWNVSVLTSLDEVAQLSADQSPSVVVSNIPAEGSTLDASSRGLIHLPTCMLRNPAGGVVIDMSYKPHYTSLLQLAQQVNTNHELAIGTNATKAPTRKLWAAVPGITILLEQGCHQFHRWTGREAPRAQIEAAAWDVYLQRC.

Residues 1-17 (MTSTASAQQPVLRTKTP) are compositionally biased toward polar residues. The segment at 1–26 (MTSTASAQQPVLRTKTPSYHAPPSTD) is disordered. Residues 1–421 (MTSTASAQQP…VQNMASTVSD (421 aa)) are 3-dehydroquinate synthase. NAD(+)-binding positions include 71–73 (DQN), 112–115 (EASK), 143–145 (GGV), and D148. Residue R159 participates in 7-phospho-2-dehydro-3-deoxy-D-arabino-heptonate binding. 168-169 (TT) is a binding site for NAD(+). Positions 175 and 181 each coordinate 7-phospho-2-dehydro-3-deoxy-D-arabino-heptonate. K190 serves as a coordination point for NAD(+). N191 provides a ligand contact to 7-phospho-2-dehydro-3-deoxy-D-arabino-heptonate. Residues 208-211 (WLKT) and N219 each bind NAD(+). Residue E223 participates in Zn(2+) binding. 7-phospho-2-dehydro-3-deoxy-D-arabino-heptonate contacts are provided by residues 223–226 (EVVK) and K287. The active-site Proton acceptor; for 3-dehydroquinate synthase activity is the E297. 7-phospho-2-dehydro-3-deoxy-D-arabino-heptonate contacts are provided by residues 301 to 305 (RNLVN) and H308. Zn(2+) is bound at residue H308. The active-site Proton acceptor; for 3-dehydroquinate synthase activity is H312. Positions 324 and 393 each coordinate 7-phospho-2-dehydro-3-deoxy-D-arabino-heptonate. H324 lines the Zn(2+) pocket. The tract at residues 434–895 (VTPIHEQPNK…WDDLERKLGI (462 aa)) is EPSP synthase. C877 (for EPSP synthase activity) is an active-site residue. The shikimate kinase stretch occupies residues 948–1165 (HATIICIGMR…KGGRRTYFLS (218 aa)). 955–962 (GMRASGKT) is an ATP binding site. A 3-dehydroquinase region spans residues 1166–1389 (LTFPDVVPKL…AAPGQLSFRQ (224 aa)). Catalysis depends on H1292, which acts as the Proton acceptor; for 3-dehydroquinate dehydratase activity. Residue K1320 is the Schiff-base intermediate with substrate; for 3-dehydroquinate dehydratase activity of the active site. The segment at 1402 to 1715 (ARRFALFGSP…AAWDVYLQRC (314 aa)) is shikimate dehydrogenase.

This sequence in the N-terminal section; belongs to the sugar phosphate cyclases superfamily. Dehydroquinate synthase family. The protein in the 2nd section; belongs to the EPSP synthase family. In the 3rd section; belongs to the shikimate kinase family. It in the 4th section; belongs to the type-I 3-dehydroquinase family. This sequence in the C-terminal section; belongs to the shikimate dehydrogenase family. As to quaternary structure, homodimer. The cofactor is Zn(2+).

It is found in the cytoplasm. The catalysed reaction is 7-phospho-2-dehydro-3-deoxy-D-arabino-heptonate = 3-dehydroquinate + phosphate. The enzyme catalyses 3-dehydroquinate = 3-dehydroshikimate + H2O. It catalyses the reaction shikimate + NADP(+) = 3-dehydroshikimate + NADPH + H(+). It carries out the reaction shikimate + ATP = 3-phosphoshikimate + ADP + H(+). The catalysed reaction is 3-phosphoshikimate + phosphoenolpyruvate = 5-O-(1-carboxyvinyl)-3-phosphoshikimate + phosphate. The protein operates within metabolic intermediate biosynthesis; chorismate biosynthesis; chorismate from D-erythrose 4-phosphate and phosphoenolpyruvate: step 2/7. Its pathway is metabolic intermediate biosynthesis; chorismate biosynthesis; chorismate from D-erythrose 4-phosphate and phosphoenolpyruvate: step 3/7. It functions in the pathway metabolic intermediate biosynthesis; chorismate biosynthesis; chorismate from D-erythrose 4-phosphate and phosphoenolpyruvate: step 4/7. It participates in metabolic intermediate biosynthesis; chorismate biosynthesis; chorismate from D-erythrose 4-phosphate and phosphoenolpyruvate: step 5/7. The protein operates within metabolic intermediate biosynthesis; chorismate biosynthesis; chorismate from D-erythrose 4-phosphate and phosphoenolpyruvate: step 6/7. In terms of biological role, the AROM polypeptide catalyzes 5 consecutive enzymatic reactions in prechorismate polyaromatic amino acid biosynthesis. This Mycosarcoma maydis (Corn smut fungus) protein is Pentafunctional AROM polypeptide.